The primary structure comprises 75 residues: Ferredoxin-thioredoxin reductase, variable chain (75 aa).

The interaction with ferredoxin stretch occupies residues 43–46 (QGRP).

It belongs to the ferredoxin thioredoxin reductase alpha subunit family. Heterodimer of subunit A (variable subunit) and subunit B (catalytic subunit). Heterodimeric FTR forms a complex with ferredoxin and thioredoxin.

Variable subunit of the ferredoxin-thioredoxin reductase (FTR), which catalyzes the two-electron reduction of thioredoxins by the electrons provided by reduced ferredoxin. This Synechocystis sp. (strain ATCC 27184 / PCC 6803 / Kazusa) protein is Ferredoxin-thioredoxin reductase, variable chain (ftrV).